We begin with the raw amino-acid sequence, 156 residues long: Endoribonuclease YbeY (156 aa).

The Zn(2+) site is built by histidine 117, histidine 121, and histidine 127.

It belongs to the endoribonuclease YbeY family. Zn(2+) serves as cofactor.

Its subcellular location is the cytoplasm. Its function is as follows. Single strand-specific metallo-endoribonuclease involved in late-stage 70S ribosome quality control and in maturation of the 3' terminus of the 16S rRNA. This chain is Endoribonuclease YbeY, found in Shewanella pealeana (strain ATCC 700345 / ANG-SQ1).